A 252-amino-acid polypeptide reads, in one-letter code: Imidazole glycerol phosphate synthase subunit HisF (252 aa).

Catalysis depends on residues Asp11 and Asp130.

Belongs to the HisA/HisF family. In terms of assembly, heterodimer of HisH and HisF.

The protein resides in the cytoplasm. The enzyme catalyses 5-[(5-phospho-1-deoxy-D-ribulos-1-ylimino)methylamino]-1-(5-phospho-beta-D-ribosyl)imidazole-4-carboxamide + L-glutamine = D-erythro-1-(imidazol-4-yl)glycerol 3-phosphate + 5-amino-1-(5-phospho-beta-D-ribosyl)imidazole-4-carboxamide + L-glutamate + H(+). It functions in the pathway amino-acid biosynthesis; L-histidine biosynthesis; L-histidine from 5-phospho-alpha-D-ribose 1-diphosphate: step 5/9. In terms of biological role, IGPS catalyzes the conversion of PRFAR and glutamine to IGP, AICAR and glutamate. The HisF subunit catalyzes the cyclization activity that produces IGP and AICAR from PRFAR using the ammonia provided by the HisH subunit. This is Imidazole glycerol phosphate synthase subunit HisF from Thermococcus kodakarensis (strain ATCC BAA-918 / JCM 12380 / KOD1) (Pyrococcus kodakaraensis (strain KOD1)).